An 851-amino-acid polypeptide reads, in one-letter code: Envelope glycoprotein gp160 (851 aa).

The N-terminal stretch at 1 to 32 (MRVKEKYQHLWRWGWRWGTMLLGMLMICSATE) is a signal peptide. At 33–679 (KLWVTVYFGV…ITNWLWYIKL (647 aa)) the chain is on the extracellular side. Cysteine 54 and cysteine 74 are joined by a disulfide. Residues asparagine 88, asparagine 136, asparagine 141, asparagine 156, asparagine 160, asparagine 186, asparagine 197, asparagine 230, asparagine 234, asparagine 241, asparagine 262, asparagine 276, asparagine 295, asparagine 301, asparagine 332, asparagine 339, and asparagine 356 are each glycosylated (N-linked (GlcNAc...) asparagine; by host). Cystine bridges form between cysteine 119/cysteine 205, cysteine 126/cysteine 196, cysteine 131/cysteine 157, cysteine 218/cysteine 247, and cysteine 228/cysteine 239. Residues 131-156 (CTDLKNDTNTNSSSGRMIMEKGEIKN) are V1. The segment at 157–196 (CSFNISTSKRGKVQKEYAFFYKLDIIPIDNDTTSYTLTSC) is V2. The tract at residues 296–330 (CTRPNNNTRKKIRIQRGPGRAFVTIGKIGNMRQAH) is V3. An intrachain disulfide couples cysteine 296 to cysteine 331. The CD4-binding loop stretch occupies residues 364-374 (SSGGDPEIVTH). 2 disulfides stabilise this stretch: cysteine 378–cysteine 440 and cysteine 385–cysteine 413. A V4 region spans residues 385-413 (CNSTQLFNSTWSTKGSNNTEGSDTITLPC). N-linked (GlcNAc...) asparagine; by host glycans are attached at residues asparagine 386, asparagine 392, asparagine 401, asparagine 443, and asparagine 458. 2 V5 regions span residues 456–466 (SNNESEIFRPG) and 458–466 (NESEIFRPG). Residues 507–527 (AVGIGALFLGFLGAAGSTMGA) form a fusion peptide region. Residues 569-587 (KQLQARILAVERYLKDQQL) are immunosuppression. Cysteines 593 and 599 form a disulfide. N-linked (GlcNAc...) asparagine; by host glycosylation is found at asparagine 606, asparagine 611, asparagine 620, asparagine 632, and asparagine 669. A coiled-coil region spans residues 628 to 662 (REINNYTSLIHSLIEESQNQQEKNEQELLELDKWA). Positions 657–678 (ELDKWASLWNWFNITNWLWYIK) are MPER; binding to GalCer. The helical transmembrane segment at 680–700 (FIMIVGGLVGLRIVFAVLSIV) threads the bilayer. Over 701 to 851 (NRVRQGYSPL…IRQGLERILL (151 aa)) the chain is Cytoplasmic. The short motif at 707-710 (YSPL) is the YXXL motif; contains endocytosis signal element. The interval 713–735 (QTHLPNPRGPDRPEGIEEEGGER) is disordered. The S-palmitoyl cysteine; by host moiety is linked to residue cysteine 759. Residues 850–851 (LL) carry the Di-leucine internalization motif motif.

This sequence belongs to the HIV-1 env protein family. In terms of assembly, the mature envelope protein (Env) consists of a homotrimer of non-covalently associated gp120-gp41 heterodimers. The resulting complex protrudes from the virus surface as a spike. There seems to be as few as 10 spikes on the average virion. Interacts with host CD4, CCR5 and CXCR4. Gp120 also interacts with the C-type lectins CD209/DC-SIGN and CLEC4M/DC-SIGNR (collectively referred to as DC-SIGN(R)). Gp120 and gp41 interact with GalCer. Gp120 interacts with host ITGA4/ITGB7 complex; on CD4+ T-cells, this interaction results in rapid activation of integrin ITGAL/LFA-1, which facilitates efficient cell-to-cell spreading of HIV-1. Gp120 interacts with cell-associated heparan sulfate; this interaction increases virus infectivity on permissive cells and may be involved in infection of CD4- cells. As to quaternary structure, the mature envelope protein (Env) consists of a homotrimer of non-covalently associated gp120-gp41 heterodimers. The resulting complex protrudes from the virus surface as a spike. There seems to be as few as 10 spikes on the average virion. Highly glycosylated by host. The high number of glycan on the protein is reffered to as 'glycan shield' because it contributes to hide protein sequence from adaptive immune system. Post-translationally, palmitoylation of the transmembrane protein and of Env polyprotein (prior to its proteolytic cleavage) is essential for their association with host cell membrane lipid rafts. Palmitoylation is therefore required for envelope trafficking to classical lipid rafts, but not for viral replication. In terms of processing, specific enzymatic cleavages in vivo yield mature proteins. Envelope glycoproteins are synthesized as an inactive precursor that is heavily N-glycosylated and processed likely by host cell furin in the Golgi to yield the mature SU and TM proteins. The cleavage site between SU and TM requires the minimal sequence [KR]-X-[KR]-R. About 2 of the 9 disulfide bonds of gp41 are reduced by P4HB/PDI, following binding to CD4 receptor.

The protein localises to the virion membrane. The protein resides in the host cell membrane. It localises to the host endosome membrane. Oligomerizes in the host endoplasmic reticulum into predominantly trimers. In a second time, gp160 transits in the host Golgi, where glycosylation is completed. The precursor is then proteolytically cleaved in the trans-Golgi and thereby activated by cellular furin or furin-like proteases to produce gp120 and gp41. Its function is as follows. Attaches the virus to the host lymphoid cell by binding to the primary receptor CD4. This interaction induces a structural rearrangement creating a high affinity binding site for a chemokine coreceptor like CXCR4 and/or CCR5. Acts as a ligand for CD209/DC-SIGN and CLEC4M/DC-SIGNR, which are respectively found on dendritic cells (DCs), and on endothelial cells of liver sinusoids and lymph node sinuses. These interactions allow capture of viral particles at mucosal surfaces by these cells and subsequent transmission to permissive cells. HIV subverts the migration properties of dendritic cells to gain access to CD4+ T-cells in lymph nodes. Virus transmission to permissive T-cells occurs either in trans (without DCs infection, through viral capture and transmission), or in cis (following DCs productive infection, through the usual CD4-gp120 interaction), thereby inducing a robust infection. In trans infection, bound virions remain infectious over days and it is proposed that they are not degraded, but protected in non-lysosomal acidic organelles within the DCs close to the cell membrane thus contributing to the viral infectious potential during DCs' migration from the periphery to the lymphoid tissues. On arrival at lymphoid tissues, intact virions recycle back to DCs' cell surface allowing virus transmission to CD4+ T-cells. In terms of biological role, acts as a class I viral fusion protein. Under the current model, the protein has at least 3 conformational states: pre-fusion native state, pre-hairpin intermediate state, and post-fusion hairpin state. During fusion of viral and target intracellular membranes, the coiled coil regions (heptad repeats) assume a trimer-of-hairpins structure, positioning the fusion peptide in close proximity to the C-terminal region of the ectodomain. The formation of this structure appears to drive apposition and subsequent fusion of viral and target cell membranes. Complete fusion occurs in host cell endosomes and is dynamin-dependent, however some lipid transfer might occur at the plasma membrane. The virus undergoes clathrin-dependent internalization long before endosomal fusion, thus minimizing the surface exposure of conserved viral epitopes during fusion and reducing the efficacy of inhibitors targeting these epitopes. Membranes fusion leads to delivery of the nucleocapsid into the cytoplasm. This is Envelope glycoprotein gp160 from Homo sapiens (Human).